The sequence spans 468 residues: GTPase Der (468 aa).

EngA-type G domains lie at 3–167 (PTLV…PYAE) and 179–352 (PVIA…TAAM). GTP is bound by residues 9–16 (GRPNVGKS), 56–60 (DTGGF), 119–122 (NKAE), 185–192 (GRPNVGKS), 232–236 (DTAGL), and 297–300 (NKWD). A KH-like domain is found at 353–437 (AHIPTPKLTR…PLRVEFRTGH (85 aa)). Positions 434 to 468 (RTGHNPYAGKKAPPLTEEEARRAHSRRRRNRKKYG) are disordered. Basic residues predominate over residues 456 to 468 (AHSRRRRNRKKYG).

The protein belongs to the TRAFAC class TrmE-Era-EngA-EngB-Septin-like GTPase superfamily. EngA (Der) GTPase family. As to quaternary structure, associates with the 50S ribosomal subunit.

In terms of biological role, GTPase that plays an essential role in the late steps of ribosome biogenesis. This Nitrosomonas eutropha (strain DSM 101675 / C91 / Nm57) protein is GTPase Der.